The sequence spans 81 residues: U1-sicaritoxin-Li1c (81 aa).

Residues 1–16 (ARGDAEKWESLISEER) constitute a propeptide that is removed on maturation. Disulfide bonds link Cys18/Cys35, Cys26/Cys40, Cys34/Cys53, and Cys42/Cys51. Arginine amide is present on Arg62. Positions 66–81 (ALMLDPETHRLLFSED) are excised as a propeptide.

The protein belongs to the neurotoxin 28 (Litx) family. As to expression, expressed by the venom gland.

Its subcellular location is the secreted. In terms of biological role, toxin active against insects (S.frugiperda larvae). May act on sodium (Nav) or calcium (Cav) channels. The chain is U1-sicaritoxin-Li1c from Loxosceles intermedia (Brown spider).